Consider the following 334-residue polypeptide: tRNA N6-adenosine threonylcarbamoyltransferase (334 aa).

Fe cation is bound by residues His-112 and His-116. Residues 135–139, Asp-168, Gly-181, Asp-185, and Asn-274 each bind substrate; that span reads VVSGG. Asp-303 is a binding site for Fe cation.

The protein belongs to the KAE1 / TsaD family. It depends on Fe(2+) as a cofactor.

The protein resides in the cytoplasm. The enzyme catalyses L-threonylcarbamoyladenylate + adenosine(37) in tRNA = N(6)-L-threonylcarbamoyladenosine(37) in tRNA + AMP + H(+). In terms of biological role, required for the formation of a threonylcarbamoyl group on adenosine at position 37 (t(6)A37) in tRNAs that read codons beginning with adenine. Is involved in the transfer of the threonylcarbamoyl moiety of threonylcarbamoyl-AMP (TC-AMP) to the N6 group of A37, together with TsaE and TsaB. TsaD likely plays a direct catalytic role in this reaction. The chain is tRNA N6-adenosine threonylcarbamoyltransferase from Anaeromyxobacter dehalogenans (strain 2CP-C).